Consider the following 159-residue polypeptide: Ribosomal RNA large subunit methyltransferase H (159 aa).

Residues leucine 76, glycine 108, and 127–132 (FSRMTF) contribute to the S-adenosyl-L-methionine site.

Belongs to the RNA methyltransferase RlmH family. As to quaternary structure, homodimer.

It localises to the cytoplasm. The enzyme catalyses pseudouridine(1915) in 23S rRNA + S-adenosyl-L-methionine = N(3)-methylpseudouridine(1915) in 23S rRNA + S-adenosyl-L-homocysteine + H(+). Functionally, specifically methylates the pseudouridine at position 1915 (m3Psi1915) in 23S rRNA. In Bacillus licheniformis (strain ATCC 14580 / DSM 13 / JCM 2505 / CCUG 7422 / NBRC 12200 / NCIMB 9375 / NCTC 10341 / NRRL NRS-1264 / Gibson 46), this protein is Ribosomal RNA large subunit methyltransferase H.